The following is a 502-amino-acid chain: MPSCAYCCSCGPKMPALQLLFLACLVWGMGARTAQFRKANDRSGRCQYTFTVASPSESSCPREDQAMSAIQDLQRDSSIQHADLESTKARVRSLESLLHQMTSGGVTGTQEVQEGLQGQLGALRRERDQLETQTRDLEVAYNNLLRDKSALEEEKRQLEQENKDLARRLEGSSQEVARLRRGQCPSTHHPSQDMLPGSREVSQWNLDTLAFQELKSELTEVPASQILKNQSGHPRSKEGDKGCGVLMWVGEPVTLRTAETITGKYGVWMRDPKPTHPYTQETTWRIDTVGTGIRQVFEYSQISQFEQGYPSKVHVLPQALESTGAVVYSGSLYFQGAESRTVLRYELNTETVKAEKEIPGAGYHGQFPYAWGGYTDIDLAVDESGLWVIYSTEETRGAIVLSKLNPENLELESTWETNIRKQSVANAFVICGILYTVSSYSSVHATINFAYDTNTGISKTLTIPFKNRYKYSSMVDYNPLERKLFAWDNFNMVTYDIKLSEM.

The N-terminal stretch at 1 to 31 (MPSCAYCCSCGPKMPALQLLFLACLVWGMGA) is a signal peptide. A coiled-coil region spans residues 82–183 (ADLESTKARV…QEVARLRRGQ (102 aa)). Residues 166 to 198 (ARRLEGSSQEVARLRRGQCPSTHHPSQDMLPGS) form a disordered region. An N-linked (GlcNAc...) asparagine glycan is attached at asparagine 229. Residues 242–501 (GCGVLMWVGE…MVTYDIKLSE (260 aa)) enclose the Olfactomedin-like domain. The cysteines at positions 243 and 431 are disulfide-linked. Residues aspartate 378, asparagine 426, alanine 427, valine 475, and aspartate 476 each coordinate Ca(2+).

In terms of assembly, homodimer (via N-terminus). Can also form higher oligomers. Interacts with OLFM3, FN1, NRCAM, GLDN and NFASC. Interacts (via N-terminus) with MYL2. Interacts with SFRP1, FRZB, FZD7, FZD10, FZD1 and WIF1; regulates Wnt signaling. Interacts with SNTA1; regulates muscle hypertrophy. Interacts with ERBB2 and ERBB3; activates ERBB2-ERBB3 signaling pathway. Interacts with SNCG; affects its secretion and its aggregation. In terms of processing, palmitoylated. Post-translationally, undergoes a calcium-dependent proteolytic cleavage at Gln-225 by CAPN2 in the endoplasmic reticulum. The result is the production of two fragments, one of 35 kDa containing the C-terminal olfactomedin-like domain, and another of 20 kDa containing the N-terminal leucine zipper-like domain. Glycosylated. Highly expressed in skeletal muscle and retina. Also detected at lower levels in thyroid gland but not in other endocrine glands such as the adrenal or pituitary glands.

It localises to the secreted. It is found in the golgi apparatus. Its subcellular location is the cytoplasmic vesicle. The protein localises to the extracellular space. The protein resides in the extracellular matrix. It localises to the extracellular exosome. It is found in the mitochondrion. Its subcellular location is the mitochondrion intermembrane space. The protein localises to the mitochondrion inner membrane. The protein resides in the mitochondrion outer membrane. It localises to the rough endoplasmic reticulum. It is found in the cell projection. Its subcellular location is the cilium. The protein localises to the endoplasmic reticulum. Functionally, secreted glycoprotein regulating the activation of different signaling pathways in adjacent cells to control different processes including cell adhesion, cell-matrix adhesion, cytoskeleton organization and cell migration. Promotes substrate adhesion, spreading and formation of focal contacts. Negatively regulates cell-matrix adhesion and stress fiber assembly through Rho protein signal transduction. Modulates the organization of actin cytoskeleton by stimulating the formation of stress fibers through interactions with components of Wnt signaling pathways. Promotes cell migration through activation of PTK2 and the downstream phosphatidylinositol 3-kinase signaling. Plays a role in bone formation and promotes osteoblast differentiation in a dose-dependent manner through mitogen-activated protein kinase signaling. Mediates myelination in the peripheral nervous system through ERBB2/ERBB3 signaling. Plays a role as a regulator of muscle hypertrophy through the components of dystrophin-associated protein complex. Involved in positive regulation of mitochondrial depolarization. Plays a role in neurite outgrowth. May participate in the obstruction of fluid outflow in the trabecular meshwork. In Rattus norvegicus (Rat), this protein is Myocilin (Myoc).